The following is a 100-amino-acid chain: MANNKSSKKRVQIAERNRLENKSYKSAMRTLMKRCFSACSNYSQQPGETAKANVKASIDSAFSKIDKAVKRGVLHRNTAAHQKSRLSAAVKQAIEPAPST.

A disordered region spans residues 79 to 100 (AAHQKSRLSAAVKQAIEPAPST).

This sequence belongs to the bacterial ribosomal protein bS20 family.

Its function is as follows. Binds directly to 16S ribosomal RNA. The protein is Small ribosomal subunit protein bS20 of Prochlorococcus marinus (strain MIT 9303).